Consider the following 82-residue polypeptide: Small ribosomal subunit protein bS18 (82 aa).

The tract at residues 1 to 20 (MSETSSAPVRRPFHRRRKTC) is disordered.

It belongs to the bacterial ribosomal protein bS18 family. As to quaternary structure, part of the 30S ribosomal subunit. Forms a tight heterodimer with protein bS6.

In terms of biological role, binds as a heterodimer with protein bS6 to the central domain of the 16S rRNA, where it helps stabilize the platform of the 30S subunit. The protein is Small ribosomal subunit protein bS18 of Rhizobium johnstonii (strain DSM 114642 / LMG 32736 / 3841) (Rhizobium leguminosarum bv. viciae).